We begin with the raw amino-acid sequence, 79 residues long: EAMZP30-47 protein (79 aa).

The span at 1–12 shows a compositional bias: low complexity; the sequence is HAASPRGRPQQR. The interval 1-47 is disordered; that stretch reads HAASPRGRPQQRSSRHGAEGPDTTRRGSCCSSSSSCCRPSTPRHPHN. The span at 16–25 shows a compositional bias: basic and acidic residues; sequence HGAEGPDTTR. The segment covering 28–37 has biased composition (low complexity); it reads SCCSSSSSCC.

Its subcellular location is the membrane. The protein localises to the cell membrane. The protein resides in the cytoplasmic vesicle. It is found in the secretory vesicle. It localises to the rhoptry. The polypeptide is EAMZP30-47 protein (CMC17) (Eimeria acervulina (Coccidian parasite)).